Here is a 428-residue protein sequence, read N- to C-terminus: Serine--tRNA ligase (428 aa).

Thr-235 to Glu-237 is an L-serine binding site. Arg-266–Glu-268 lines the ATP pocket. L-serine is bound at residue Glu-289. Glu-353–Ser-356 provides a ligand contact to ATP. Ser-389 provides a ligand contact to L-serine.

It belongs to the class-II aminoacyl-tRNA synthetase family. Type-1 seryl-tRNA synthetase subfamily. Homodimer. The tRNA molecule binds across the dimer.

Its subcellular location is the cytoplasm. It carries out the reaction tRNA(Ser) + L-serine + ATP = L-seryl-tRNA(Ser) + AMP + diphosphate + H(+). The enzyme catalyses tRNA(Sec) + L-serine + ATP = L-seryl-tRNA(Sec) + AMP + diphosphate + H(+). Its pathway is aminoacyl-tRNA biosynthesis; selenocysteinyl-tRNA(Sec) biosynthesis; L-seryl-tRNA(Sec) from L-serine and tRNA(Sec): step 1/1. Its function is as follows. Catalyzes the attachment of serine to tRNA(Ser). Is also able to aminoacylate tRNA(Sec) with serine, to form the misacylated tRNA L-seryl-tRNA(Sec), which will be further converted into selenocysteinyl-tRNA(Sec). This Shewanella amazonensis (strain ATCC BAA-1098 / SB2B) protein is Serine--tRNA ligase.